Reading from the N-terminus, the 31-residue chain is Cytochrome b6-f complex subunit 6 (31 aa).

A helical transmembrane segment spans residues 4–26; that stretch reads ITSYFGFLLAASTITPALFIGLS.

It belongs to the PetL family. As to quaternary structure, the 4 large subunits of the cytochrome b6-f complex are cytochrome b6, subunit IV (17 kDa polypeptide, PetD), cytochrome f and the Rieske protein, while the 4 small subunits are PetG, PetL, PetM and PetN. The complex functions as a dimer.

It localises to the plastid. It is found in the chloroplast thylakoid membrane. Component of the cytochrome b6-f complex, which mediates electron transfer between photosystem II (PSII) and photosystem I (PSI), cyclic electron flow around PSI, and state transitions. PetL is important for photoautotrophic growth as well as for electron transfer efficiency and stability of the cytochrome b6-f complex. The protein is Cytochrome b6-f complex subunit 6 of Buxus microphylla (Littleleaf boxwood).